The primary structure comprises 1666 residues: Complement C3 (1666 aa).

Residues 1-22 (MGPAAGPSLLLLLLASVSLALG) form the signal peptide. Residues Ser70, Ser296, and Ser302 each carry the phosphoserine modification. 13 disulfide bridges follow: Cys557–Cys821, Cys630–Cys666, Cys698–Cys725, Cys699–Cys732, Cys712–Cys733, Cys878–Cys1517, Cys1106–Cys1163, Cys1363–Cys1493, Cys1394–Cys1462, Cys1510–Cys1515, Cys1522–Cys1593, Cys1540–Cys1664, and Cys1640–Cys1649. Position 676 is a phosphoserine (Ser676). The region spanning 698–733 (CCEDGMRENPMQFSCQRRARYVSLGEACVKAFLDCC) is the Anaphylatoxin-like domain. Asn944 is a glycosylation site (N-linked (GlcNAc...) asparagine). Ser973 carries the post-translational modification Phosphoserine. The isoglutamyl cysteine thioester (Cys-Gln) cross-link spans 1015–1018 (CGEQ). Ser1326 carries the phosphoserine modification. Residues 1522–1664 (CFIQLPEKIT…FTENMVVFGC (143 aa)) form the NTR domain. The residue at position 1576 (Ser1576) is a Phosphoserine. A glycan (N-linked (GlcNAc...) asparagine) is linked at Asn1620. The interval 1637 to 1662 (AEECQDEENQQQCQDLGTFTENMVVF) is interaction with CFP/properdin.

In absence of complement activation, the C3 precursor is first processed by the removal of 4 Arg residues, forming two chains, beta and alpha, linked by a disulfide bond. As to quaternary structure, complement C3b is composed of complement C3b and complement C3 beta chains that are associated via disulfide bonds. Non-enzymatic component of the C5 convertase, also named C4bC2bC3b, composed of the serine protease complement C2b (C2), complement C3b, as well as complement C4b (C4). Non-enzymatic component of the C5 convertase of the alternative complement pathways composed of the serine protease complement CFB and complement C3b. Interacts with CFP; interaction takes place together with CFB in the alternative complement system and allows the complex to become active. Interacts with CR1 (via Sushi 8 and Sushi 9 domains). Interacts with CFH. In terms of assembly, interacts with CFH. Interacts with CR2. During pregnancy, C3dg exists as a complex (probably a 2:2:2 heterohexamer) with AGT and the proform of PRG2. Interacts with CR2 (via the N-terminal Sushi domains 1 and 2). In terms of processing, C3 precursor is first processed by the removal of 4 Arg residues, forming two chains, beta and alpha, linked by a disulfide bond. During activation of the complement systems, the alpha chain is cleaved into C3a and C3b by the C3 convertase: C3b stays linked to the beta chain, while C3a is released in the plasma. The alpha chain is cleaved by the serine protease complement C2b component of the C3 convertase to generate C3a and C3b following activation by the classical, lectin and GZMK complement systems. The alpha chain is cleaved by CFB component of the C3 convertase to generate C3a and C3b following activation by the alternative complement system. Post-translationally, C3a is further processed by carboxypeptidases to release the C-terminal arginine residue generating the acylation stimulating protein (ASP). Levels of ASP are increased in adipocytes in the postprandial period and by insulin and dietary chylomicrons. Complement C3b is rapidly split in two positions by factor I (CFI) and a cofactor (CFH) to form iC3b (inactivated C3b) and C3f which is released. CFI and CFH catalyze proteolytic degradation of already-deposited complement C3b. Then iC3b is slowly cleaved (possibly by CFI) to form C3c (beta chain + alpha' chain fragment 1 + alpha' chain fragment 2), C3dg and C3f. Other proteases produce other fragments such as C3d or C3g. In terms of processing, upon activation, the internal thioester bond reacts with carbohydrate antigens on the target surface to form amide or ester bonds, leading to covalent association with the surface of pathogens. Post-translationally, complement C3b interacts with complement C4b via a thioester linkage. Phosphorylated by FAM20C in the extracellular medium.

The protein localises to the secreted. It is found in the cell surface. Complement activation is inhibited by VSIG4. In terms of biological role, precursor of non-enzymatic components of the classical, alternative, lectin and GZMK complement pathways, which consist in a cascade of proteins that leads to phagocytosis and breakdown of pathogens and signaling that strengthens the adaptive immune system. Functionally, non-enzymatic component of C5 convertase. Generated following cleavage by C3 convertase, it covalently attaches to the surface of pathogens, where it acts as an opsonin that marks the surface of antigens for removal. Complement C3b binds covalently via its reactive thioester, to cell surface carbohydrates or immune aggregates. Together with complement C4b, it then recruits the serine protease complement C2b to form the C5 convertase, which cleaves and activate C5, the next component of the complement pathways. In the alternative complement pathway, recruits the serine protease CFB to form the C5 convertase that cleaves and activates C5. Its function is as follows. Mediator of local inflammatory process released following cleavage by C3 convertase. Acts by binding to its receptor, C3AR1, activating G protein-coupled receptor signaling, promoting the phosphorylation, ARRB2-mediated internalization and endocytosis of C3AR1. C3a anaphylatoxin stimulates the activation of immune cells such as mast cells and basophilic leukocytes to release inflammation agents, such as cytokines, chemokines and histamine, which promote inflammation development. Also acts as potent chemoattractant for the migration of macrophages and neutrophils to the inflamed tissues, resulting in neutralization of the inflammatory triggers by multiple ways, such as phagocytosis and generation of reactive oxidants. Adipogenic hormone that stimulates triglyceride synthesis and glucose transport in adipocytes, regulating fat storage and playing a role in postprandial triglyceride clearance. Appears to stimulate triglyceride synthesis via activation of the PLC, MAPK and AKT signaling pathways. Acts by binding to its receptor, C5AR2, activating G protein-coupled receptor signaling, promoting the phosphorylation, ARRB2-mediated internalization and endocytosis of C5AR2. In terms of biological role, acts as a chemoattractant for neutrophils in chronic inflammation. This chain is Complement C3, found in Cavia porcellus (Guinea pig).